Reading from the N-terminus, the 1314-residue chain is Ubinuclein-2 (1314 aa).

The segment at 1-113 is disordered; it reads MAEPRRVAFI…PPPRPPKETV (113 aa). Position 13 is a phosphoserine (Ser13). Composition is skewed to basic and acidic residues over residues 16–31 and 55–67; these read RRRE…EPPR and ARDK…EVSR. The span at 81 to 96 shows a compositional bias: pro residues; sequence PEPPPPPLPLQTPPPR. Thr229 bears the Phosphothreonine mark. Position 236 is a phosphoserine (Ser236). Residues 236–288 form a disordered region; that stretch reads SDTEEDDFTDNQKHKPPKVPKIKEDDIEVKKRKRKEEGEKEKKPRKKVPKQLG. Residue Thr238 is modified to Phosphothreonine. Lys258 participates in a covalent cross-link: Glycyl lysine isopeptide (Lys-Gly) (interchain with G-Cter in SUMO2). The residue at position 297 (Ser297) is a Phosphoserine. Disordered stretches follow at residues 322 to 345, 400 to 424, 559 to 584, 657 to 709, 785 to 818, 849 to 893, 948 to 975, 1003 to 1185, and 1288 to 1314; these read DALK…PKPP, ATSD…TFPS, LQAD…RVIG, LTSA…ASAS, ATPK…DLAH, GLQR…SLTQ, YRLP…APST, ASPK…GSSV, and PLPA…RKPQ. Residues 330–341 are compositionally biased toward low complexity; the sequence is PKVPVTPSSSSL. Phosphoserine is present on residues Ser402, Ser405, and Ser408. The segment covering 415-424 has biased composition (polar residues); sequence GNTTHPTFPS. Composition is skewed to basic and acidic residues over residues 560 to 570 and 673 to 684; these read QADEEREKNGS and KVKECSPKKDPK. Ser570 carries the phosphoserine modification. The span at 685-709 shows a compositional bias: low complexity; sequence APASVVASGGGPSTSSSTSIVASAS. The span at 792–801 shows a compositional bias: polar residues; the sequence is STQTAHSSSL. Positions 849–879 are enriched in low complexity; that stretch reads GLQRSSQIHASSSSQTHVSSSQAQAAASSHA. The segment covering 883 to 893 has biased composition (polar residues); the sequence is SEAQDASSLTQ. A compositionally biased stretch (low complexity) spans 1003 to 1013; it reads ASPKLAASPKP. Pro residues predominate over residues 1014-1028; it reads ATSPKPLPSPKPSVS. Residues 1029–1040 show a composition bias toward low complexity; it reads PKPSLSAKPSIS. An N6-acetyllysine modification is found at Lys1036. Composition is skewed to polar residues over residues 1057–1132 and 1142–1153; these read PSSS…NSLS and RGSNLNSSGANR. A Phosphoserine modification is found at Ser1091. Lys1116 carries the post-translational modification N6-acetyllysine. The span at 1305–1314 shows a compositional bias: basic and acidic residues; sequence GDTKLPRKPQ.

Belongs to the ubinuclein family.

The polypeptide is Ubinuclein-2 (Ubn2) (Mus musculus (Mouse)).